A 337-amino-acid polypeptide reads, in one-letter code: MIEIDGSFGEGGGQILRTSLTLSVITGKPFRIFNIRANRPNPGLQRQHLWAVRAMKMISNAETKGDEVGSKELTFIPHEIKGNSIIDIDIGTAGSVTLIMQTMIPAIINKNMRIKIKGGTDVPKSPTIDYIRLVYLEILRKIGIESKVNLIKRGHYPEGGGEVIIENVNGNPSDFSLLELGKLIMIKGISHVSSLPSHIAERQKDSAKAILSKLGVQIEIETDVRQGEVSKGSGIALAAIGEKSIIGADSLGERGKRAEIVGEEAARKLIDNLNTKAAVDVHMSDMLMIFTSLFGGEYIGAELTSHAYTNMEIIRKFLDVKIEISGKRPFRFKAKIF.

Residues Gln101 and 282–285 (HMSD) each bind ATP. Catalysis depends on His306, which acts as the Tele-AMP-histidine intermediate.

This sequence belongs to the RNA 3'-terminal cyclase family. Type 1 subfamily.

Its subcellular location is the cytoplasm. The enzyme catalyses a 3'-end 3'-phospho-ribonucleotide-RNA + ATP = a 3'-end 2',3'-cyclophospho-ribonucleotide-RNA + AMP + diphosphate. Functionally, catalyzes the conversion of 3'-phosphate to a 2',3'-cyclic phosphodiester at the end of RNA. The mechanism of action of the enzyme occurs in 3 steps: (A) adenylation of the enzyme by ATP; (B) transfer of adenylate to an RNA-N3'P to produce RNA-N3'PP5'A; (C) and attack of the adjacent 2'-hydroxyl on the 3'-phosphorus in the diester linkage to produce the cyclic end product. The biological role of this enzyme is unknown but it is likely to function in some aspects of cellular RNA processing. The chain is RNA 3'-terminal phosphate cyclase (rtcA) from Saccharolobus solfataricus (strain ATCC 35092 / DSM 1617 / JCM 11322 / P2) (Sulfolobus solfataricus).